A 687-amino-acid chain; its full sequence is Chloride channel protein ClC-Kb (687 aa).

At 1–50 (MEEFVGLREGSSGNPVTLQELWGPCPRIRRGIRGGLEWLKQKLFRLGEDW) the chain is on the cytoplasmic side. 2 helical membrane passes run 51-82 (YFLM…QWLY) and 91-111 (LRYL…SGFS). Residues 116–127 (PSSGGSGIPEVK) constitute an intramembrane region (helical). S121 is a chloride binding site. 2 helical membrane-spanning segments follow: residues 141–160 (IKNF…CGST) and 161–180 (LFLG…AAYL). N-linked (GlcNAc...) asparagine glycosylation is present at N193. The helical intramembrane region spans 203 to 224 (AAAAVGVATVFAAPFSGVLFSI). A helical membrane pass occupies residues 236-255 (YWRGFFAATCGAFMFRLLAV). Ca(2+) contacts are provided by E259, E261, D278, and E281. The next 2 membrane-spanning stretches (helical) occupy residues 282–310 (IFFF…FGFI) and 325–342 (PVYS…TYPP). The helical intramembrane region spans 349-360 (ASRLSMKQHLDS). Helical transmembrane passes span 400-420 (GTLA…TTIP) and 421-440 (MPAG…GRLF). F426 serves as a coordination point for chloride. The segment at residues 464 to 496 (GGYALAGAAAFSGAVTHTISTALLAFEVTGQIV) is an intramembrane region (helical). The chain crosses the membrane as a helical span at residues 500 to 520 (PVLMAVLAANAIAQSCQPSFY). Residues 521–687 (DGTVIVKKLP…SNLTNPPAPK (167 aa)) are Cytoplasmic-facing. 2 consecutive CBS domains span residues 551–609 (MNHS…EPPS) and 626–684 (CPTE…TNPP).

It belongs to the chloride channel (TC 2.A.49) family. CLCNKB subfamily. In terms of assembly, homodimer. Interacts with BSND. Post-translationally, N-glycosylated.

The protein localises to the basolateral cell membrane. It carries out the reaction chloride(in) = chloride(out). The enzyme catalyses iodide(out) = iodide(in). It catalyses the reaction nitrate(in) = nitrate(out). The catalysed reaction is bromide(in) = bromide(out). Its activity is regulated as follows. Activated by extracellular Ca(2+) and inhibited by extracellular acidic pH. Its function is as follows. Anion-selective channel permeable to small monovalent anions with ion selectivity for chloride &gt; bromide &gt; nitrate &gt; iodide. Forms a homodimeric channel where each subunit has its own ion conduction pathway. May conduct double-barreled currents controlled by two types of gates, two fast gates that control each subunit independently and a slow common gate that opens and shuts off both subunits simultaneously. Assembles with the regulatory subunit BSND/Barttin for sorting at the basolateral plasma membrane domain and functional switch to the ion conducting state. CLCNKB:BSND channels display mostly a linear current-voltage relationship controlled by common gate. Mediates chloride conductance along nephron segments, namely the thick ascending limb of Henle's loop, convoluted tubule and the collecting duct, contributing to the maintenance of systemic acid-base and electrolyte homeostasis. Conducts chloride currents in the stria vascularis of the inner ear to establish the endocochlear potential necessary for normal hearing. The sequence is that of Chloride channel protein ClC-Kb from Homo sapiens (Human).